An 802-amino-acid polypeptide reads, in one-letter code: E3 ubiquitin-protein ligase UHRF2 (802 aa).

The Ubiquitin-like domain occupies 1–78; sequence MWIQVRTIDG…IQLLVRPDPD (78 aa). Disordered regions lie at residues 80–116 and 153–197; these read LPGT…TSAR and RASD…STSN. Polar residues-rich tracts occupy residues 82–96, 153–177, and 188–197; these read GTST…SNSP, RASD…TNGN, and KLDSVPSTSN. The segment at 117–311 is required for interaction with histone H3; it reads ARLIDPGFGI…VDEIFKIERP (195 aa). The tract at residues 194–288 is interaction with PCNP; that stretch reads STSNSDCVAA…KELRVKIFLG (95 aa). A PHD-type zinc finger spans residues 344–395; that stretch reads SCSCRVCGGKHEPNMQLLCDECNVAYHIYCLNPPLDKVPEEEYWYCPSCKTD. The segment at 414 to 644 is methyl-CpG binding and interaction with HDAC1; the sequence is KMPSASTESR…LQYPAGYPSD (231 aa). The region spanning 448–612 is the YDG domain; sequence GPIPGIPVGS…FLVWRYLLRR (165 aa). The tract at residues 640 to 674 is disordered; the sequence is GYPSDKEGKKPKGQSKKQPSGTTKRPISDDDCPSA. Residue serine 667 is modified to Phosphoserine. The segment at 733 to 772 adopts an RING-type zinc-finger fold; it reads CVCCQELVYQPVTTECFHNVCKDCLQRSFKAQVFSCPACR.

As to quaternary structure, homodimer; disulfide-linked. Binds methylated CpG containing oligonucleotides. Interacts with H3; the interaction has a preference for the 'Lys-9' trimethylated form of H3 (H3K9me3). Interacts with PCNP. Interacts with HDAC1. Interacts directly with CCNE1; the interaction ubiquitinates CCNE1 and appears independent of CCNE1 phosphorylation. Interacts with CCND1; the interaction ubiquitinates CCND1 and appears independent of CCND1 phosphorylation. Interacts with p53/TP53 and RB1. Interacts with UBE2I. Interacts with ZNF618. Interacts with UHRF1. Interacts with FANCD2. Interacts with ATR. Interacts with PCNA. May be autoubiquitinated; which may lead to proteasomal degradation. In terms of processing, phosphorylated. Phosphorylation may be mediated by CDK2. Post-translationally, autosumoylated.

Its subcellular location is the nucleus. The protein resides in the chromosome. The enzyme catalyses S-ubiquitinyl-[E2 ubiquitin-conjugating enzyme]-L-cysteine + [acceptor protein]-L-lysine = [E2 ubiquitin-conjugating enzyme]-L-cysteine + N(6)-ubiquitinyl-[acceptor protein]-L-lysine.. The protein operates within protein modification; protein ubiquitination. E3 ligase activity is robustly activated by 5-hydroxymethylcytosine. E3 ubiquitin ligase that plays important roles in DNA methylation, histone modifications, cell cycle and DNA repair. Acts as a specific reader for 5-hydroxymethylcytosine (5hmC) and thereby recruits various substrates to these sites to ubiquitinate them. This activity also allows the maintenance of 5mC levels at specific genomic loci and regulates neuron-related gene expression. Participates in cell cycle regulation by ubiquitinating cyclins CCND1 and CCNE1 and thereby inducing G1 arrest. Also ubiquitinates PCNP leading to its degradation by the proteasome. Plays an active role in DNA damage repair by ubiquitinating p21/CDKN1A leading to its proteasomal degradation. Also promotes DNA repair by acting as an interstrand cross-links (ICLs) sensor. Mechanistically, cooperates with UHRF1 to ensure recruitment of FANCD2 to ICLs, leading to FANCD2 monoubiquitination and subsequent activation. Contributes to UV-induced DNA damage response by physically interacting with ATR in response to irradiation, thereby promoting ATR activation. The sequence is that of E3 ubiquitin-protein ligase UHRF2 (UHRF2) from Homo sapiens (Human).